Here is a 248-residue protein sequence, read N- to C-terminus: Triosephosphate isomerase (248 aa).

9-11 is a binding site for substrate; it reads NWK. The Electrophile role is filled by histidine 94. Glutamate 166 acts as the Proton acceptor in catalysis. Residues glycine 172, serine 212, and 233–234 each bind substrate; that span reads GG.

The protein belongs to the triosephosphate isomerase family. Homodimer.

It localises to the cytoplasm. The catalysed reaction is D-glyceraldehyde 3-phosphate = dihydroxyacetone phosphate. It functions in the pathway carbohydrate biosynthesis; gluconeogenesis. Its pathway is carbohydrate degradation; glycolysis; D-glyceraldehyde 3-phosphate from glycerone phosphate: step 1/1. Its function is as follows. Involved in the gluconeogenesis. Catalyzes stereospecifically the conversion of dihydroxyacetone phosphate (DHAP) to D-glyceraldehyde-3-phosphate (G3P). This Clostridium botulinum (strain ATCC 19397 / Type A) protein is Triosephosphate isomerase.